Consider the following 330-residue polypeptide: Quinone oxidoreductase (330 aa).

A2 carries the post-translational modification N-acetylalanine. K23 carries the post-translational modification N6-acetyllysine. NADP(+) contacts are provided by residues Y53, S158–V161, G181, H200, N229, V246–K249, and V269–L271. The residue at position 248 (S248) is a Phosphoserine.

This sequence belongs to the zinc-containing alcohol dehydrogenase family. Quinone oxidoreductase subfamily. Homotetramer.

The protein localises to the cytoplasm. It carries out the reaction 2 a quinone + NADPH + H(+) = 2 a 1,4-benzosemiquinone + NADP(+). Functionally, does not have alcohol dehydrogenase activity. Binds NADP and acts through a one-electron transfer process. Orthoquinones, such as 1,2-naphthoquinone or 9,10-phenanthrenequinone, are the best substrates (in vitro). May act in the detoxification of xenobiotics. Interacts with (AU)-rich elements (ARE) in the 3'-UTR of target mRNA species and enhances their stability. NADPH binding interferes with mRNA binding. This is Quinone oxidoreductase (CRYZ) from Lama guanicoe (Guanaco).